Here is a 116-residue protein sequence, read N- to C-terminus: Phosphoribosyl-ATP pyrophosphatase (116 aa).

The protein belongs to the PRA-PH family.

It localises to the cytoplasm. The enzyme catalyses 1-(5-phospho-beta-D-ribosyl)-ATP + H2O = 1-(5-phospho-beta-D-ribosyl)-5'-AMP + diphosphate + H(+). The protein operates within amino-acid biosynthesis; L-histidine biosynthesis; L-histidine from 5-phospho-alpha-D-ribose 1-diphosphate: step 2/9. This is Phosphoribosyl-ATP pyrophosphatase from Bordetella avium (strain 197N).